The sequence spans 140 residues: Nucleoside diphosphate kinase (140 aa).

Positions 11, 59, 87, 93, 104, and 114 each coordinate ATP. H117 serves as the catalytic Pros-phosphohistidine intermediate.

The protein belongs to the NDK family. As to quaternary structure, homotetramer. Mg(2+) serves as cofactor.

It localises to the cytoplasm. It carries out the reaction a 2'-deoxyribonucleoside 5'-diphosphate + ATP = a 2'-deoxyribonucleoside 5'-triphosphate + ADP. It catalyses the reaction a ribonucleoside 5'-diphosphate + ATP = a ribonucleoside 5'-triphosphate + ADP. Its function is as follows. Major role in the synthesis of nucleoside triphosphates other than ATP. The ATP gamma phosphate is transferred to the NDP beta phosphate via a ping-pong mechanism, using a phosphorylated active-site intermediate. The sequence is that of Nucleoside diphosphate kinase from Bartonella tribocorum (strain CIP 105476 / IBS 506).